A 214-amino-acid chain; its full sequence is Protein-L-isoaspartate O-methyltransferase (214 aa).

The active site involves Ser-63.

It belongs to the methyltransferase superfamily. L-isoaspartyl/D-aspartyl protein methyltransferase family.

Its subcellular location is the cytoplasm. The catalysed reaction is [protein]-L-isoaspartate + S-adenosyl-L-methionine = [protein]-L-isoaspartate alpha-methyl ester + S-adenosyl-L-homocysteine. Catalyzes the methyl esterification of L-isoaspartyl residues in peptides and proteins that result from spontaneous decomposition of normal L-aspartyl and L-asparaginyl residues. It plays a role in the repair and/or degradation of damaged proteins. The protein is Protein-L-isoaspartate O-methyltransferase of Maridesulfovibrio salexigens (strain ATCC 14822 / DSM 2638 / NCIMB 8403 / VKM B-1763) (Desulfovibrio salexigens).